The sequence spans 151 residues: Deoxyuridine 5'-triphosphate nucleotidohydrolase (151 aa).

Residues 70–72 (RSG), Asn83, 87–89 (LID), and Met97 each bind substrate.

The protein belongs to the dUTPase family. It depends on Mg(2+) as a cofactor.

It catalyses the reaction dUTP + H2O = dUMP + diphosphate + H(+). The protein operates within pyrimidine metabolism; dUMP biosynthesis; dUMP from dCTP (dUTP route): step 2/2. Its function is as follows. This enzyme is involved in nucleotide metabolism: it produces dUMP, the immediate precursor of thymidine nucleotides and it decreases the intracellular concentration of dUTP so that uracil cannot be incorporated into DNA. The chain is Deoxyuridine 5'-triphosphate nucleotidohydrolase from Pseudomonas putida (strain ATCC 47054 / DSM 6125 / CFBP 8728 / NCIMB 11950 / KT2440).